Here is a 257-residue protein sequence, read N- to C-terminus: Diphthine synthase (257 aa).

S-adenosyl-L-methionine-binding positions include Leu-9, Asp-85, Val-88, 113–114 (SI), Leu-164, Ala-209, and His-234.

It belongs to the diphthine synthase family. As to quaternary structure, homodimer.

It catalyses the reaction 2-[(3S)-amino-3-carboxypropyl]-L-histidyl-[translation elongation factor 2] + 3 S-adenosyl-L-methionine = diphthine-[translation elongation factor 2] + 3 S-adenosyl-L-homocysteine + 3 H(+). The protein operates within protein modification; peptidyl-diphthamide biosynthesis. S-adenosyl-L-methionine-dependent methyltransferase that catalyzes the trimethylation of the amino group of the modified target histidine residue in translation elongation factor 2 (EF-2), to form an intermediate called diphthine. The three successive methylation reactions represent the second step of diphthamide biosynthesis. This chain is Diphthine synthase, found in Methanocaldococcus jannaschii (strain ATCC 43067 / DSM 2661 / JAL-1 / JCM 10045 / NBRC 100440) (Methanococcus jannaschii).